A 107-amino-acid polypeptide reads, in one-letter code: Protein p13 MTCP-1 (107 aa).

It belongs to the TCL1 family. In terms of assembly, interacts with AKT1 and AKT2 (via PH domain). Does not interact with AKT3. In terms of tissue distribution, not found at a significant level in any tissue.

Its function is as follows. Enhances the phosphorylation and activation of AKT1 and AKT2. The protein is Protein p13 MTCP-1 (Mtcp1) of Mus musculus (Mouse).